Reading from the N-terminus, the 202-residue chain is Endothelin-1 (202 aa).

The first 25 residues, 1 to 25 (MDYFPMIFALLFVAFQGAPEAAVLG), serve as a signal peptide directing secretion. The propeptide occupies 26–50 (TELSAGAEDGGEKPAPATPWRPRRS). 2 cysteine pairs are disulfide-bonded: C53–C67 and C55–C63. The propeptide occupies 74–202 (VNTPEHVVPY…DKKVIYNRAH (129 aa)). The segment at 110–124 (CQCASQTDKKCWNFC) is endothelin-like.

It belongs to the endothelin/sarafotoxin family.

It is found in the secreted. In terms of biological role, endothelins are endothelium-derived vasoconstrictor peptides. Probable ligand for G-protein coupled receptors EDNRA and EDNRB which activates PTK2B, BCAR1, BCAR3 and, GTPases RAP1 and RHOA cascade in glomerular mesangial cells. Also binds the DEAR/FBXW7-AS1 receptor. Promotes mesenteric arterial wall remodeling via activation of ROCK signaling and subsequent colocalization of NFATC3 with F-actin filaments. NFATC3 then translocates to the nucleus where it subsequently promotes the transcription of the smooth muscle hypertrophy and differentiation marker ACTA2. The chain is Endothelin-1 (EDN1) from Bos taurus (Bovine).